We begin with the raw amino-acid sequence, 339 residues long: Undecaprenyl-phosphate 4-deoxy-4-formamido-L-arabinose transferase (339 aa).

2 helical membrane-spanning segments follow: residues 235–255 (LSLV…FLLV) and 269–289 (LFVL…GMGL).

It belongs to the glycosyltransferase 2 family.

The protein localises to the cell inner membrane. It carries out the reaction UDP-4-deoxy-4-formamido-beta-L-arabinose + di-trans,octa-cis-undecaprenyl phosphate = 4-deoxy-4-formamido-alpha-L-arabinopyranosyl di-trans,octa-cis-undecaprenyl phosphate + UDP. It functions in the pathway glycolipid biosynthesis; 4-amino-4-deoxy-alpha-L-arabinose undecaprenyl phosphate biosynthesis; 4-amino-4-deoxy-alpha-L-arabinose undecaprenyl phosphate from UDP-4-deoxy-4-formamido-beta-L-arabinose and undecaprenyl phosphate: step 1/2. The protein operates within bacterial outer membrane biogenesis; lipopolysaccharide biosynthesis. In terms of biological role, catalyzes the transfer of 4-deoxy-4-formamido-L-arabinose from UDP to undecaprenyl phosphate. The modified arabinose is attached to lipid A and is required for resistance to polymyxin and cationic antimicrobial peptides. In Pseudomonas aeruginosa (strain UCBPP-PA14), this protein is Undecaprenyl-phosphate 4-deoxy-4-formamido-L-arabinose transferase.